Here is a 247-residue protein sequence, read N- to C-terminus: Phosphoribosylaminoimidazole-succinocarboxamide synthase (247 aa).

The protein belongs to the SAICAR synthetase family.

It catalyses the reaction 5-amino-1-(5-phospho-D-ribosyl)imidazole-4-carboxylate + L-aspartate + ATP = (2S)-2-[5-amino-1-(5-phospho-beta-D-ribosyl)imidazole-4-carboxamido]succinate + ADP + phosphate + 2 H(+). It participates in purine metabolism; IMP biosynthesis via de novo pathway; 5-amino-1-(5-phospho-D-ribosyl)imidazole-4-carboxamide from 5-amino-1-(5-phospho-D-ribosyl)imidazole-4-carboxylate: step 1/2. The polypeptide is Phosphoribosylaminoimidazole-succinocarboxamide synthase (Herpetosiphon aurantiacus (strain ATCC 23779 / DSM 785 / 114-95)).